A 388-amino-acid chain; its full sequence is S-adenosylmethionine synthase (388 aa).

An ATP-binding site is contributed by His-14. Asp-16 provides a ligand contact to Mg(2+). Glu-42 is a binding site for K(+). L-methionine-binding residues include Glu-55 and Gln-98. Positions 98–108 (QSAEISSAVDQ) are flexible loop. Residues 166 to 168 (DGK), Asp-242, 248 to 249 (RK), Ala-265, and Lys-269 each bind ATP. An L-methionine-binding site is contributed by Asp-242. Lys-273 provides a ligand contact to L-methionine.

This sequence belongs to the AdoMet synthase family. In terms of assembly, homotetramer; dimer of dimers. Requires Mg(2+) as cofactor. K(+) serves as cofactor.

It localises to the cytoplasm. The catalysed reaction is L-methionine + ATP + H2O = S-adenosyl-L-methionine + phosphate + diphosphate. It participates in amino-acid biosynthesis; S-adenosyl-L-methionine biosynthesis; S-adenosyl-L-methionine from L-methionine: step 1/1. Functionally, catalyzes the formation of S-adenosylmethionine (AdoMet) from methionine and ATP. The overall synthetic reaction is composed of two sequential steps, AdoMet formation and the subsequent tripolyphosphate hydrolysis which occurs prior to release of AdoMet from the enzyme. This Oenococcus oeni (strain ATCC BAA-331 / PSU-1) protein is S-adenosylmethionine synthase.